A 439-amino-acid chain; its full sequence is Xaa-Pro dipeptidase (439 aa).

5 residues coordinate Mn(2+): Asp-244, Asp-255, His-335, Glu-380, and Glu-419.

It belongs to the peptidase M24B family. Bacterial-type prolidase subfamily. It depends on Mn(2+) as a cofactor.

It carries out the reaction Xaa-L-Pro dipeptide + H2O = an L-alpha-amino acid + L-proline. Functionally, splits dipeptides with a prolyl residue in the C-terminal position. In Shewanella sediminis (strain HAW-EB3), this protein is Xaa-Pro dipeptidase.